The following is a 240-amino-acid chain: MNPPQARVSEQTKDLLSVMVNQHPEEDAKVCKSSDNSPLYNTMVMLSYGGDTDLLLSSACTRTSTVNRSAFTQHSVFYIISTVLIQPICCIFFFFYYKATRCMLLFTAGLLLTILHHFRLIIMLLCVYRNIRSDLLPLSTSQQLLLGIIVVTRTMLFCITAYYTLFIDTRVFFLITGHLQSEVIFPDSVSKILPVSWGPSPAVLLVMAAVIYAMDCLVDTVSFIGPRVWVRVMLKTSISF.

Transmembrane regions (helical) follow at residues 76 to 96 (VFYI…FFFY), 104 to 124 (LLFT…IIML), 147 to 167 (GIIV…TLFI), and 203 to 225 (VLLV…SFIG).

The protein belongs to the alphaherpesvirinae UL20 family. As to quaternary structure, interacts with gK (via N-terminus); this interaction plays a role in the coordinate transport of UL20 and gK to the trans-Golgi network (TGN), and is required for their cell surface expression. Interacts with gB. Interacts with host STING1; this interaction inhibits host interferon-beta promoter activation.

The protein resides in the virion. Its subcellular location is the host cell membrane. It is found in the host endosome membrane. The protein localises to the host Golgi apparatus membrane. It localises to the host nucleus membrane. Plays an essential role in egress of virus particles from the nucleus, cytoplasmic envelopment and virus-induced cell fusion. Forms a functional protein complex with gK and this interaction is absolutely essential for their coordinate intracellular transport, gK glycosylation, expression on host cell surface, and function. Together, they modulate gB-mediated virus-induced cell fusion and virion egress and therefore actively participate in these processes. In addition, plays a role in inhibiting the type I interferon responses by suppressing STING1-mediated activation of the IFN-beta promoter. In Homo sapiens (Human), this protein is Protein UL20 homolog (39).